Consider the following 581-residue polypeptide: Protein SPT2 homolog (581 aa).

A compositionally biased stretch (low complexity) spans 26-35; that stretch reads YYSTKYSPPK. 2 disordered regions span residues 26–50 and 145–495; these read YYST…NIQK and QEDK…EYDS. Positions 36-76 form a coiled coil; that stretch reads KQSKESKQLSSNIQKFLQKKEAEEAEKKRLERQKLNDLLAK. Residues 162–181 show a composition bias toward basic and acidic residues; sequence SGTKERVKAAITREREEAKG. Composition is skewed to polar residues over residues 182 to 197 and 204 to 213; these read NTRQ…SSAT and VARSYSTSKT. Composition is skewed to basic and acidic residues over residues 218 to 236 and 256 to 312; these read NAEK…EQRR and LAEK…KETP. Positions 276-307 form a coiled coil; the sequence is ERLLSAREKRELEERQRQQEQRAQRLKMRESE. The span at 352–376 shows a compositional bias: low complexity; the sequence is SSASSTSLSSSNSHSSASRSSVSSS. Residues 447-461 are compositionally biased toward polar residues; it reads TRQTPSSDVQRSQGG. Acidic residues predominate over residues 486-495; sequence DDDDEDEYDS.

It belongs to the SPT2 family.

This chain is Protein SPT2 homolog, found in Drosophila melanogaster (Fruit fly).